Reading from the N-terminus, the 173-residue chain is ATP synthase subunit b (173 aa).

Residues 20–40 (IIATLAIFLVLMFLLKKVAWG) form a helical membrane-spanning segment.

This sequence belongs to the ATPase B chain family. F-type ATPases have 2 components, F(1) - the catalytic core - and F(0) - the membrane proton channel. F(1) has five subunits: alpha(3), beta(3), gamma(1), delta(1), epsilon(1). F(0) has three main subunits: a(1), b(2) and c(10-14). The alpha and beta chains form an alternating ring which encloses part of the gamma chain. F(1) is attached to F(0) by a central stalk formed by the gamma and epsilon chains, while a peripheral stalk is formed by the delta and b chains.

It is found in the cell membrane. Its function is as follows. F(1)F(0) ATP synthase produces ATP from ADP in the presence of a proton or sodium gradient. F-type ATPases consist of two structural domains, F(1) containing the extramembraneous catalytic core and F(0) containing the membrane proton channel, linked together by a central stalk and a peripheral stalk. During catalysis, ATP synthesis in the catalytic domain of F(1) is coupled via a rotary mechanism of the central stalk subunits to proton translocation. In terms of biological role, component of the F(0) channel, it forms part of the peripheral stalk, linking F(1) to F(0). The chain is ATP synthase subunit b from Lysinibacillus sphaericus (strain C3-41).